A 529-amino-acid polypeptide reads, in one-letter code: Calcium/calmodulin-dependent protein kinase type II subunit gamma (529 aa).

Positions 14–272 constitute a Protein kinase domain; the sequence is YQLFEELGKG…ADQALKHPWV (259 aa). ATP-binding positions include 20–28 and Lys43; that span reads LGKGAFSVV. The Proton acceptor role is filled by Asp136. Positions 283 to 292 are autoinhibitory domain; sequence HRQETVECLR. Residues Thr287, Thr306, and Thr307 each carry the phosphothreonine; by autocatalysis modification. Positions 294 to 316 are calmodulin-binding; that stretch reads FNARRKLKGAILTTMLVSRNFSA. Phosphoserine is present on residues Ser311, Ser334, Ser349, Ser352, and Ser455. The segment at 324–353 is disordered; it reads KSDGGVKKRKSSSSVHLMPQSNNKNSLVSP. Over residues 342-352 the composition is skewed to polar residues; sequence PQSNNKNSLVS.

The protein belongs to the protein kinase superfamily. CAMK Ser/Thr protein kinase family. CaMK subfamily. As to quaternary structure, CAMK2 is composed of 4 different chains: alpha (CAMK2A), beta (CAMK2B), gamma (CAMK2G), and delta (CAMK2D). The different isoforms assemble into homo- or heteromultimeric holoenzymes composed of 12 subunits with two hexameric rings stacked one on top of the other. Autophosphorylation of Thr-287 following activation by Ca(2+)/calmodulin. Phosphorylation of Thr-287 locks the kinase into an activated state.

It localises to the sarcoplasmic reticulum membrane. The enzyme catalyses L-seryl-[protein] + ATP = O-phospho-L-seryl-[protein] + ADP + H(+). It carries out the reaction L-threonyl-[protein] + ATP = O-phospho-L-threonyl-[protein] + ADP + H(+). Its activity is regulated as follows. Activated by Ca(2+)/calmodulin. Binding of calmodulin results in conformational change that relieves intrasteric autoinhibition and allows autophosphorylation of Thr-287 which turns the kinase in a constitutively active form and confers to the kinase a Ca(2+)-independent activity. Calcium/calmodulin-dependent protein kinase that functions autonomously after Ca(2+)/calmodulin-binding and autophosphorylation, and is involved in sarcoplasmic reticulum Ca(2+) transport in skeletal muscle and may function in dendritic spine and synapse formation and neuronal plasticity. In slow-twitch muscles, is involved in regulation of sarcoplasmic reticulum (SR) Ca(2+) transport and in fast-twitch muscle participates in the control of Ca(2+) release from the SR through phosphorylation of the ryanodine receptor-coupling factor triadin. In the central nervous system, it is involved in the regulation of neurite formation and arborization. It may participate in the promotion of dendritic spine and synapse formation and maintenance of synaptic plasticity which enables long-term potentiation (LTP) and hippocampus-dependent learning. In response to interferon-gamma (IFN-gamma) stimulation, catalyzes phosphorylation of STAT1, stimulating the JAK-STAT signaling pathway. The protein is Calcium/calmodulin-dependent protein kinase type II subunit gamma (Camk2g) of Mus musculus (Mouse).